A 637-amino-acid polypeptide reads, in one-letter code: ATP-dependent zinc metalloprotease FtsH (637 aa).

Residues 1–7 (MNRVFRN) lie on the Cytoplasmic side of the membrane. The chain crosses the membrane as a helical span at residues 8-28 (TIFYLLILLVVIGVVSYFQTS). Over 29 to 109 (NPKTENMSYS…VEPAQETSGW (81 aa)) the chain is Extracellular. The chain crosses the membrane as a helical span at residues 110–130 (VTFLTTIIPFVIIFILFFFLL). Residues 131–637 (NQAQGGGSRV…TEEKKDDTKE (507 aa)) lie on the Cytoplasmic side of the membrane. 201–208 (GPPGTGKT) is an ATP binding site. A Zn(2+)-binding site is contributed by His423. Glu424 is an active-site residue. Residues His427 and Asp499 each coordinate Zn(2+). Positions 514–637 (FGMSEKLGPL…TEEKKDDTKE (124 aa)) are not necessary for FtsH function.

The protein in the central section; belongs to the AAA ATPase family. It in the C-terminal section; belongs to the peptidase M41 family. Homohexamer. Interacts with FloT at midcell. Interacts with FloA at midcell. Another study shows only minor colocalization with FloA or FloT. Zn(2+) serves as cofactor.

Its subcellular location is the cell membrane. It is found in the membrane raft. Acts as a processive, ATP-dependent zinc metallopeptidase for both cytoplasmic and membrane proteins. Plays a role in the quality control of integral membrane proteins. Functionally, in vitro partially degrades Spo0E, the phosphatase that acts on Spo0A-P. Recognition requires the last 14 residues of Spo0E. Its stabile accumulation requires FlotA and Flot. May degrade EzrA. The polypeptide is ATP-dependent zinc metalloprotease FtsH (Bacillus subtilis (strain 168)).